The primary structure comprises 366 residues: Aminomethyltransferase (366 aa).

Belongs to the GcvT family. In terms of assembly, the glycine cleavage system is composed of four proteins: P, T, L and H.

The enzyme catalyses N(6)-[(R)-S(8)-aminomethyldihydrolipoyl]-L-lysyl-[protein] + (6S)-5,6,7,8-tetrahydrofolate = N(6)-[(R)-dihydrolipoyl]-L-lysyl-[protein] + (6R)-5,10-methylene-5,6,7,8-tetrahydrofolate + NH4(+). In terms of biological role, the glycine cleavage system catalyzes the degradation of glycine. The protein is Aminomethyltransferase of Bacillus cereus (strain 03BB102).